A 433-amino-acid polypeptide reads, in one-letter code: Phosphomethylpyrimidine synthase (433 aa).

Residues Asn69, Met98, Tyr127, His163, 185 to 187 (SRG), 226 to 229 (DALR), and Glu265 each bind substrate. Residue His269 participates in Zn(2+) binding. Tyr292 is a binding site for substrate. His333 contacts Zn(2+). [4Fe-4S] cluster is bound by residues Cys409, Cys412, and Cys416.

Belongs to the ThiC family. It depends on [4Fe-4S] cluster as a cofactor.

The enzyme catalyses 5-amino-1-(5-phospho-beta-D-ribosyl)imidazole + S-adenosyl-L-methionine = 4-amino-2-methyl-5-(phosphooxymethyl)pyrimidine + CO + 5'-deoxyadenosine + formate + L-methionine + 3 H(+). Its pathway is cofactor biosynthesis; thiamine diphosphate biosynthesis. Catalyzes the synthesis of the hydroxymethylpyrimidine phosphate (HMP-P) moiety of thiamine from aminoimidazole ribotide (AIR) in a radical S-adenosyl-L-methionine (SAM)-dependent reaction. This is Phosphomethylpyrimidine synthase from Finegoldia magna (strain ATCC 29328 / DSM 20472 / WAL 2508) (Peptostreptococcus magnus).